An 855-amino-acid chain; its full sequence is MICAL-like protein 1 (855 aa).

One can recognise a Calponin-homology (CH) domain in the interval 2–108 (AGPRGALLAW…YVSQYYNHFT (107 aa)). Disordered stretches follow at residues 110-165 (SGQA…SSAC), 226-253 (GRSGTRPLSLQKQQPAAAAEAKDGEDSD), and 269-659 (QASS…HGFP). The span at 124-135 (PAAPSPTSTSPA) shows a compositional bias: low complexity. The LIM zinc-binding domain occupies 163–226 (SACAACGQRV…ERCTRLGLGG (64 aa)). Over residues 269–278 (QASSEVQPHT) the composition is skewed to polar residues. Serine 293 and serine 307 each carry phosphoserine. Residues 308–325 (ESSALTPPTPRPRSSLQQ) are compositionally biased toward polar residues. Phosphothreonine is present on residues threonine 313 and threonine 316. The span at 356–367 (LSERMTAPRKDP) shows a compositional bias: basic and acidic residues. Residues 423–425 (NPF) carry the NPF1 motif. Acidic residues predominate over residues 425–434 (FEEEEEEEEA). A compositionally biased stretch (pro residues) spans 439–449 (VPSPAPAPPET). Threonine 461 and threonine 463 each carry phosphothreonine. Residues serine 464, serine 465, serine 478, and serine 480 each carry the phosphoserine modification. Residues 499 to 514 (PSPALSVESLSSESSS) are compositionally biased toward low complexity. Positions 542–554 (PGTSANSVTPSAH) are enriched in polar residues. The segment covering 555–570 (SSLSSSGELGQPSGEQ) has biased composition (low complexity). Serine 613 carries the phosphoserine modification. The NPF2 signature appears at 625 to 627 (NPF). A mediates the interaction with RAB13 and intramolecular interaction with the calponin-homology (CH) domain region spans residues 644–855 (KGAKPVRPPA…AKSKAPTGKS (212 aa)). The region spanning 663 to 810 (RKVQADQYIP…EEEEDKMLET (148 aa)) is the bMERB domain. Positions 679–703 (EMDSIERQLDALEHSGVLLEEKLRG) form a coiled coil. A phosphoserine mark is found at serine 682 and serine 732. The interval 692–855 (HSGVLLEEKL…AKSKAPTGKS (164 aa)) is necessary and sufficient to associate with tubular recycling endosome membranes, mediate phosphatidic acid-binding and membrane tubulation. Positions 794-822 (LDEDRQREEEEDKMLETMIKKKDFQREAE) form a coiled coil. The segment covering 815–826 (KDFQREAESDSK) has biased composition (basic and acidic residues). A disordered region spans residues 815 to 855 (KDFQREAESDSKKKGKFKTMKVLKLLGNKRDAKSKAPTGKS).

As to quaternary structure, homooligomer. Interacts (via NPF1 motif) with EHD1 (via EH domain); the interaction is direct and probably recruits EHD1 to membranes. Interacts with EHD3 (via EH domain). Interacts with RAB35 (GTP-bound form); the interaction is direct and probably recruits MICALL1 to membranes. Interacts with ACAP2; the interaction is indirect through RAB35. Interacts with RAB8A (GTP-bound form); regulates RAB8A association with recycling endosomes. Interacts with RAB13 (GTP-bound form). Interacts with ARF6 (GTP-bound form). Interacts with PACSIN2 (via the SH3 domain). Interacts with DPYSL2.

The protein resides in the recycling endosome membrane. Its subcellular location is the late endosome membrane. It localises to the cell projection. It is found in the cilium membrane. The protein localises to the cytoplasm. The protein resides in the cytoskeleton. Its subcellular location is the microtubule organizing center. It localises to the centrosome. It is found in the centriole. Its function is as follows. Lipid-binding protein with higher affinity for phosphatidic acid, a lipid enriched in recycling endosome membranes. On endosome membranes, acts as a downstream effector of Rab proteins recruiting cytosolic proteins to regulate membrane tubulation. Involved in a late step of receptor-mediated endocytosis regulating for instance endocytosed-EGF receptor trafficking. Alternatively, regulates slow endocytic recycling of endocytosed proteins back to the plasma membrane. Also involved in cargo protein delivery to the plasma membrane. Plays a role in ciliogenesis coordination, recruits EHD1 to primary cilium where it is anchored to the centriole through interaction with tubulins. May indirectly play a role in neurite outgrowth. The sequence is that of MICAL-like protein 1 (Micall1) from Rattus norvegicus (Rat).